We begin with the raw amino-acid sequence, 223 residues long: Agamous-like MADS-box protein AGL11 (223 aa).

The MADS-box domain maps to 1–61; that stretch reads MGRGKIEIKR…GRVYEYSNNN (61 aa). The 91-residue stretch at 87-177 folds into the K-box domain; that stretch reads AQYYQQESAK…RTKIAEVERL (91 aa).

It localises to the nucleus. Its function is as follows. Probable transcription factor involved in seed development. This Vitis vinifera (Grape) protein is Agamous-like MADS-box protein AGL11.